Reading from the N-terminus, the 1301-residue chain is ABC transporter BEA3 (1301 aa).

The disordered stretch occupies residues 1–30; sequence MGKRTAENSAANGEGEEKHPEIGVDGRPEK. Residues 15 to 30 show a composition bias toward basic and acidic residues; sequence GEEKHPEIGVDGRPEK. A run of 4 helical transmembrane segments spans residues 54-74, 103-123, 177-197, and 203-223; these read VGVI…IVFG, LYLL…NFAF, LGVF…AFIY, and LVTF…LPYI. The region spanning 54-345 is the ABC transmembrane type-1 1 domain; sequence VGVIASIGVG…ISTPLLAVSK (292 aa). N-linked (GlcNAc...) asparagine glycosylation occurs at N229. Transmembrane regions (helical) follow at residues 281–301 and 313–333; these read FIAL…GLAF and INQL…VTAM. Residues 378-667 form the ABC transporter 1 domain; it reads IILEDVTFAY…EAGLYYNLVN (290 aa). Residue 413 to 420 participates in ATP binding; sequence GPSGSGKS. Positions 442-454 are enriched in basic and acidic residues; sequence VEKPTDKKNNGGK. Positions 442-461 are disordered; the sequence is VEKPTDKKNNGGKEEDEQEL. N-linked (GlcNAc...) asparagine glycosylation is found at N511 and N618. Residues 682 to 708 are disordered; sequence VIAKEERPSSVHEKAHTESTIEEKPLE. The ABC transmembrane type-1 2 domain maps to 735–1024; sequence ALTLFFSACA…ALSFGPNVAQ (290 aa). The next 6 helical transmembrane spans lie at 745–765, 779–799, 858–878, 880–900, 961–981, and 987–1007; these read GAAV…FGYL, SLMW…TFFL, SVFI…AFAW, LALV…YWRM, WVSL…AIVL, and LLLS…SVLN. An ABC transporter 2 domain is found at 1060-1296; that stretch reads IELENIYFKY…RGVYWQMCQS (237 aa). 1094–1101 serves as a coordination point for ATP; the sequence is GASGSGKS.

The protein belongs to the ABC transporter superfamily. ABCB family. Multidrug resistance exporter (TC 3.A.1.201) subfamily.

It is found in the cell membrane. In terms of biological role, ABC transporter; part of the gene cluster that mediates the biosynthesis of beauvericin (BEA), a non-ribosomal cyclic hexadepsipeptide that shows antibiotic, antifungal, insecticidal, and cancer cell antiproliferative and antihaptotactic activity. Functions as a regulator of beauvericin production, rather than in BEA transport out of the cell. Beauvericin has low toxicity to the producing fungus and BEA3 does not play a role in detoxification and self-protection of the producing fungus. This Gibberella fujikuroi (strain CBS 195.34 / IMI 58289 / NRRL A-6831) (Bakanae and foot rot disease fungus) protein is ABC transporter BEA3.